Reading from the N-terminus, the 175-residue chain is Adenine phosphoribosyltransferase (175 aa).

It belongs to the purine/pyrimidine phosphoribosyltransferase family. As to quaternary structure, homodimer.

The protein resides in the cytoplasm. It catalyses the reaction AMP + diphosphate = 5-phospho-alpha-D-ribose 1-diphosphate + adenine. The protein operates within purine metabolism; AMP biosynthesis via salvage pathway; AMP from adenine: step 1/1. Catalyzes a salvage reaction resulting in the formation of AMP, that is energically less costly than de novo synthesis. The protein is Adenine phosphoribosyltransferase of Caldicellulosiruptor bescii (strain ATCC BAA-1888 / DSM 6725 / KCTC 15123 / Z-1320) (Anaerocellum thermophilum).